We begin with the raw amino-acid sequence, 1225 residues long: Cytosolic carboxypeptidase 1 (1225 aa).

Acidic residues predominate over residues 366–392 (DDVVDESDDNEDTDAETEAEAENEDSD). Positions 366–398 (DDVVDESDDNEDTDAETEAEAENEDSDQICKND) are disordered. The Peptidase M14 domain occupies 842–1132 (YPYTYSTLKM…KFCVGLLRLK (291 aa)). The Zn(2+) site is built by histidine 914, glutamate 917, and histidine 1011. The Proton donor/acceptor role is filled by glutamate 1096. Positions 1181 to 1193 (YSAESNDDVDPDL) are enriched in acidic residues. Positions 1181 to 1225 (YSAESNDDVDPDLPENIGDFETSTLEEESFSDSEITRTHMSGQST) are disordered.

Belongs to the peptidase M14 family. The cofactor is Zn(2+).

It is found in the cytoplasm. Its subcellular location is the cytosol. It localises to the nucleus. The protein localises to the mitochondrion. The catalysed reaction is (L-glutamyl)(n+1)-gamma-L-glutamyl-L-glutamyl-[protein] + H2O = (L-glutamyl)(n)-gamma-L-glutamyl-L-glutamyl-[protein] + L-glutamate. It carries out the reaction C-terminal L-alpha-aminoacyl-L-glutamyl-L-glutamyl-[tubulin] + H2O = C-terminal L-alpha-aminoacyl-L-glutamyl-[tubulin] + L-glutamate. Its function is as follows. Metallocarboxypeptidase that mediates protein deglutamylation of tubulin and non-tubulin target proteins. Catalyzes the removal of polyglutamate side chains present on the gamma-carboxyl group of glutamate residues within the C-terminal tail of alpha- and beta-tubulin. Specifically cleaves tubulin long-side-chains, while it is not able to remove the branching point glutamate. Also catalyzes the removal of polyglutamate residues from the carboxy-terminus of alpha-tubulin as well as non-tubulin proteins. The polypeptide is Cytosolic carboxypeptidase 1 (agtpbp1) (Xenopus laevis (African clawed frog)).